The following is a 180-amino-acid chain: Large ribosomal subunit protein uL5 (180 aa).

This sequence belongs to the universal ribosomal protein uL5 family. In terms of assembly, part of the 50S ribosomal subunit; part of the 5S rRNA/L5/L18/L25 subcomplex. Contacts the 5S rRNA and the P site tRNA. Forms a bridge to the 30S subunit in the 70S ribosome.

Functionally, this is one of the proteins that bind and probably mediate the attachment of the 5S RNA into the large ribosomal subunit, where it forms part of the central protuberance. In the 70S ribosome it contacts protein S13 of the 30S subunit (bridge B1b), connecting the 2 subunits; this bridge is implicated in subunit movement. Contacts the P site tRNA; the 5S rRNA and some of its associated proteins might help stabilize positioning of ribosome-bound tRNAs. In Streptococcus pyogenes serotype M1, this protein is Large ribosomal subunit protein uL5.